Consider the following 734-residue polypeptide: MALRFPRFSQGLAQDPTTRRIWFGIATAHDFESHDDITEERLYQNIFASHFGQLAIIFLWTSGNLFHVAWQGNFELWVQDPLHVRPIAHAIWDPHFGQPAVEAFTRGGALGPVNIAYSGVYQWWYTIGLRTNEDLYTGALFLLFLSAISLIAGWLHLQPKWKPSVSWFKNAESRLNHHLSGLFGVSSLAWTGHLVHVAIPASRGEYVRWNNFLDVLPHPQGLGPLFTGQWNLYAQNPDSSSHLFGTAQGAGTAILTLLGGFHPQTQSLWLTDIAHHHLAIAFIFLVAGHMYRTNFGIGHSMKDLLDAHIPPGGRLGRGHEGLYDTINNSLHFQLGLALASLGVITSLVAQHMYSLPAYAFIAQDFTTQAALYTHHQYIAGFIMTGAFAHGAIFFIRDYNPEQNEDNVLARMLEHKEAIISHLSWASLFLGFHTLGLYVHNDVMLAFGTPEKQILIEPIFAQWIQSAHGKTSYGFDVLLSSTSGPAFNAGRSIWLPGWLNAVNENSNSLFLTIGPGDFLVHHAIALGLHTTTLILVKGALDARGSKLMPDKKDFGYSFPCDGPGRGGTCDISAWDAFYLAVFWMLNTIGWVTFYWHWKHITLWQGNVSQFNESSTYLMGWLRDYLWLNSSQLINGYNPFGMNSLSVWAWMFLFGHLVWATGFMFLISWRGYWQELIETLAWAHERTPLANLIRWRDKPVALSIVQARLVGLVHFSVGYIFTYAAFLIASTSGKFG.

8 helical membrane-spanning segments follow: residues 46–69 (IFAS…FHVA), 135–158 (LYTG…LHLQ), 175–199 (LNHH…HVAI), 273–291 (IAHH…GHMY), 330–353 (LHFQ…QHMY), 369–395 (AALY…IFFI), 417–439 (AIIS…LYVH), and 517–535 (FLVH…LILV). Cysteine 559 and cysteine 568 together coordinate [4Fe-4S] cluster. Transmembrane regions (helical) follow at residues 575–596 (AFYL…YWHW) and 643–665 (LSVW…MFLI). Chlorophyll a-binding residues include histidine 654, methionine 662, and tyrosine 670. Tryptophan 671 provides a ligand contact to phylloquinone. A helical transmembrane segment spans residues 707–727 (LVGLVHFSVGYIFTYAAFLIA).

This sequence belongs to the PsaA/PsaB family. As to quaternary structure, the PsaA/B heterodimer binds the P700 chlorophyll special pair and subsequent electron acceptors. PSI consists of a core antenna complex that captures photons, and an electron transfer chain that converts photonic excitation into a charge separation. The eukaryotic PSI reaction center is composed of at least 11 subunits. It depends on P700 is a chlorophyll a/chlorophyll a' dimer, A0 is one or more chlorophyll a, A1 is one or both phylloquinones and FX is a shared 4Fe-4S iron-sulfur center. as a cofactor.

The protein localises to the plastid. The protein resides in the chloroplast thylakoid membrane. The catalysed reaction is reduced [plastocyanin] + hnu + oxidized [2Fe-2S]-[ferredoxin] = oxidized [plastocyanin] + reduced [2Fe-2S]-[ferredoxin]. Functionally, psaA and PsaB bind P700, the primary electron donor of photosystem I (PSI), as well as the electron acceptors A0, A1 and FX. PSI is a plastocyanin-ferredoxin oxidoreductase, converting photonic excitation into a charge separation, which transfers an electron from the donor P700 chlorophyll pair to the spectroscopically characterized acceptors A0, A1, FX, FA and FB in turn. Oxidized P700 is reduced on the lumenal side of the thylakoid membrane by plastocyanin. This is Photosystem I P700 chlorophyll a apoprotein A2 from Nicotiana tomentosiformis (Tobacco).